A 586-amino-acid polypeptide reads, in one-letter code: Ezrin (586 aa).

The FERM domain occupies 2-296 (PKPINVRVTT…NHELYMRRRK (295 aa)). Position 60 is an N6-acetyllysine (lysine 60). A [IL]-x-C-x-x-[DE] motif motif is present at residues 115–120 (IYCPPE). A Phosphotyrosine; by PDGFR modification is found at tyrosine 146. Residues 244–586 (EIRNISFNDK…KQRIDEFEAL (343 aa)) are interaction with SCYL3. Positions 302-462 (VQQMKAQARE…QDDLVKTKEE (161 aa)) form a coiled coil. Residues 306–341 (KAQAREEKHQKQLERQQLETEKKRRETVEREKEQMM) are disordered. Basic and acidic residues predominate over residues 308–341 (QAREEKHQKQLERQQLETEKKRRETVEREKEQMM). Tyrosine 354 is modified (phosphotyrosine; by PDGFR). Serine 366 carries the phosphoserine modification. Tyrosine 478 carries the phosphotyrosine modification. The segment at 485-564 (VQESLQDEGA…NENMRQGRDK (80 aa)) is disordered. Basic and acidic residues predominate over residues 507–528 (GIRDDRNEEKRITEAEKNERVQ). A compositionally biased stretch (polar residues) spans 530 to 539 (QLLTLSSELS). A Phosphoserine modification is found at serine 535. Positions 540-564 (QARDENKRTHNDIIHNENMRQGRDK) are enriched in basic and acidic residues. The residue at position 567 (threonine 567) is a Phosphothreonine; by ROCK2 and PKC/PRKCI.

Monomer. Homodimer. Interacts with PALS1 and NHERF2. Found in a complex with EZR, PODXL and NHERF2. Interacts with MCC, PLEKHG6, PODXL, SCYL3/PACE1, NHERF1 and TMEM8B. Interacts (when phosphorylated) with FES/FPS. Interacts with dimeric S100P, the interaction may be activating through unmasking of F-actin binding sites. Identified in complexes that contain VIM, EZR, AHNAK, BFSP1, BFSP2, ANK2, PLEC, PRX and spectrin. Detected in a complex composed of at least EZR, AHNAK, PPL and PRX. Interacts with PDPN (via cytoplasmic domain); activates RHOA and promotes epithelial-mesenchymal transition. Interacts with SPN/CD43 cytoplasmic tail, CD44 and ICAM2. Interacts with SLC9A3; interaction targets SLC9A3 to the apical membrane. Interacts with SLC9A1; regulates interactions of SLC9A1 with cytoskeletal and promotes stress fiber formation. Interacts with CLIC5; may work together in a complex which also includes RDX and MYO6 to stabilize linkages between the plasma membrane and subjacent actin cytoskeleton at the base of stereocilia. Post-translationally, phosphorylated by tyrosine-protein kinases. Phosphorylation by ROCK2 suppresses the head-to-tail association of the N-terminal and C-terminal halves resulting in an opened conformation which is capable of actin and membrane-binding. In terms of processing, S-nitrosylation is induced by interferon-gamma and oxidatively-modified low-densitity lipoprotein (LDL(ox)) possibly implicating the iNOS-S100A8/9 transnitrosylase complex. In terms of tissue distribution, expressed in cerebral cortex, basal ganglia, hippocampus, hypophysis, and optic nerve. Weakly expressed in brain stem and diencephalon. Stronger expression was detected in gray matter of frontal lobe compared to white matter (at protein level). Component of the microvilli of intestinal epithelial cells. Preferentially expressed in astrocytes of hippocampus, frontal cortex, thalamus, parahippocampal cortex, amygdala, insula, and corpus callosum. Not detected in neurons in most tissues studied.

It localises to the apical cell membrane. Its subcellular location is the cell projection. The protein localises to the microvillus membrane. It is found in the ruffle membrane. The protein resides in the cytoplasm. It localises to the cell cortex. Its subcellular location is the cytoskeleton. The protein localises to the microvillus. A head-to-tail association, of the N-terminal and C-terminal halves results in a closed conformation (inactive form) which is incapable of actin or membrane-binding. Functionally, probably involved in connections of major cytoskeletal structures to the plasma membrane. In epithelial cells, required for the formation of microvilli and membrane ruffles on the apical pole. Along with PLEKHG6, required for normal macropinocytosis. The sequence is that of Ezrin (EZR) from Homo sapiens (Human).